Consider the following 454-residue polypeptide: Guanine deaminase (454 aa).

Residues His-82 and His-84 each contribute to the Zn(2+) site. Substrate is bound by residues 84 to 87 (HAPQ), 213 to 214 (RF), 240 to 243 (HISE), and Asp-330. Residues His-240 and Asp-330 each contribute to the Zn(2+) site. Ser-453 carries the post-translational modification Phosphoserine.

This sequence belongs to the metallo-dependent hydrolases superfamily. ATZ/TRZ family. As to quaternary structure, homodimer. The cofactor is Zn(2+).

It catalyses the reaction guanine + H2O + H(+) = xanthine + NH4(+). The protein operates within purine metabolism; guanine degradation; xanthine from guanine: step 1/1. Catalyzes the hydrolytic deamination of guanine, producing xanthine and ammonia. This Rattus norvegicus (Rat) protein is Guanine deaminase (Gda).